Here is a 95-residue protein sequence, read N- to C-terminus: MVTIRLRRMGKTKQPSYRLVVADSRAPRDGKFIEIVGHYNPVRQPKELHVKADRVRYWLSVGAQPSETVVRLLKQVGVLDADGKPTPTATTPVEG.

It belongs to the bacterial ribosomal protein bS16 family.

The chain is Small ribosomal subunit protein bS16 from Roseiflexus sp. (strain RS-1).